Here is a 279-residue protein sequence, read N- to C-terminus: MGNQQQHPIGIFDSGLGGITVLRALYRQLPQESIIYFADTARLPYGDRSPEELIQYVREILTWMEAQGVKMVVMACNTSSAIALDVIRSEFKTPVLGLILPGARGAVSQGKRIGVIATQATVNSGAYENAILEANPEAAVWQMPCPEFVPLIEANRINDPHTKRIVQKRLQPLLEQGIDTLVYGCTHYRHLSGVIQSILPSHVICVDPAEYVVSATEQELELMGWKNPQSPLPTRFAVSGCPDQFAQSAKGWLGHQPLVEQVDLKNLIMNASPLSITNG.

Substrate is bound by residues D13 to S14 and Y45 to G46. C76 functions as the Proton donor/acceptor in the catalytic mechanism. N77–T78 serves as a coordination point for substrate. C185 functions as the Proton donor/acceptor in the catalytic mechanism. T186–H187 is a binding site for substrate.

The protein belongs to the aspartate/glutamate racemases family.

It carries out the reaction L-glutamate = D-glutamate. Its pathway is cell wall biogenesis; peptidoglycan biosynthesis. In terms of biological role, provides the (R)-glutamate required for cell wall biosynthesis. The sequence is that of Glutamate racemase from Picosynechococcus sp. (strain ATCC 27264 / PCC 7002 / PR-6) (Agmenellum quadruplicatum).